A 406-amino-acid polypeptide reads, in one-letter code: Enoyl-[acyl-carrier-protein] reductase [NADH] (406 aa).

NAD(+) is bound by residues 48–53, 74–75, 111–112, and 140–141; these read GASTGF, FE, DA, and IA. Residue tyrosine 226 participates in substrate binding. Tyrosine 236 acts as the Proton donor in catalysis. NAD(+)-binding positions include lysine 245 and 275 to 277; that span reads LVT.

It belongs to the TER reductase family. Monomer.

The catalysed reaction is a 2,3-saturated acyl-[ACP] + NAD(+) = a (2E)-enoyl-[ACP] + NADH + H(+). Its pathway is lipid metabolism; fatty acid biosynthesis. Its function is as follows. Involved in the final reduction of the elongation cycle of fatty acid synthesis (FAS II). Catalyzes the reduction of a carbon-carbon double bond in an enoyl moiety that is covalently linked to an acyl carrier protein (ACP). In Coxiella burnetii (strain Dugway 5J108-111), this protein is Enoyl-[acyl-carrier-protein] reductase [NADH].